A 1328-amino-acid chain; its full sequence is Retrovirus-related Pol polyprotein from transposon TNT 1-94 (1328 aa).

A disordered region spans residues 189–265; sequence PENQGQALIT…SGQKNDDNTA (77 aa). The segment covering 217 to 229 has biased composition (basic residues); it reads ARGKSKNRSKSRV. The CCHC-type zinc finger occupies 230 to 247; it reads RNCYNCNQPGHFKRDCPN. The span at 241–253 shows a compositional bias: basic and acidic residues; that stretch reads FKRDCPNPRKGKG. Catalysis depends on Asp297, which acts as the For protease activity. The 170-residue stretch at 473 to 642 folds into the Integrase catalytic domain; sequence SSERKLNILD…IPERVWTNKE (170 aa). Positions 729-742 are enriched in polar residues; sequence TIPSTSNNPTSAES. The interval 729–800 is disordered; the sequence is TIPSTSNNPT…RVESRRYPST (72 aa). Basic and acidic residues predominate over residues 770–798; it reads EVEHPTQGEEQHQPLRRSERPRVESRRYP.

The enzyme catalyses DNA(n) + a 2'-deoxyribonucleoside 5'-triphosphate = DNA(n+1) + diphosphate. The protein is Retrovirus-related Pol polyprotein from transposon TNT 1-94 of Nicotiana tabacum (Common tobacco).